The following is a 1131-amino-acid chain: Replication factor C subunit 1 (1131 aa).

Disordered stretches follow at residues Lys-14–Lys-87, Tyr-92–Glu-111, Ala-120–Ala-201, and Ala-225–Ala-378. The span at Gly-38–Lys-54 shows a compositional bias: basic and acidic residues. Lys-49 is covalently cross-linked (Glycyl lysine isopeptide (Lys-Gly) (interchain with G-Cter in SUMO2)). Residue Tyr-66 is modified to Phosphotyrosine. Ser-68, Ser-70, Ser-72, and Ser-107 each carry phosphoserine. A Phosphothreonine modification is found at Thr-109. Polar residues predominate over residues Asn-127 to Ser-138. Residue Ser-155 is modified to Phosphoserine. 2 positions are modified to phosphothreonine: Thr-160 and Thr-162. 8 positions are modified to phosphoserine: Ser-163, Ser-172, Ser-189, Ser-244, Ser-250, Ser-253, Ser-281, and Ser-309. The span at Lys-184 to Ala-201 shows a compositional bias: basic and acidic residues. The segment covering Ser-308–Met-319 has biased composition (low complexity). 2 stretches are compositionally biased toward basic and acidic residues: residues Ala-334 to Thr-350 and Thr-359 to Arg-373. The segment at Thr-354–Lys-528 is interferon-stimulated-response-element binding region. Phosphoserine is present on Ser-365. Residues Gly-399–Ala-489 form the BRCT domain. The segment at Glu-491–Lys-525 is disordered. The residue at position 535 (Ser-535) is a Phosphoserine. ATP is bound at residue Gly-635–Thr-642. Residues Pro-1073–Lys-1131 form a disordered region. A compositionally biased stretch (acidic residues) spans Glu-1078 to Thr-1088. Ser-1090 bears the Phosphoserine mark. Positions Lys-1104 to Arg-1108 match the Nuclear localization signal motif. The segment covering Ser-1113 to Lys-1123 has biased composition (basic and acidic residues).

This sequence belongs to the activator 1 large subunit family. Large subunit of the RFC complex, an heteropentameric complex consisting of RFC1 and four small subunits RFC2, RFC3, RFC4 and RFC5; the RFC complex interacts with PCNA and the interaction involves RFC1.

The protein localises to the nucleus. Subunit of the replication factor C (RFC) complex which acts during elongation of primed DNA templates by DNA polymerases delta and epsilon, and is necessary for ATP-dependent loading of proliferating cell nuclear antigen (PCNA) onto primed DNA. This subunit binds to the primer-template junction. Binds the PO-B transcription element as well as other GA rich DNA sequences. Can bind single- or double-stranded DNA. The polypeptide is Replication factor C subunit 1 (Rfc1) (Mus musculus (Mouse)).